The primary structure comprises 265 residues: 4-hydroxy-2-oxo-heptane-1,7-dioate aldolase (265 aa).

The Proton acceptor role is filled by histidine 45. Residue glutamine 147 coordinates substrate. Residue glutamate 149 participates in a divalent metal cation binding. Residues alanine 174 and aspartate 175 each coordinate substrate. Residue aspartate 175 coordinates a divalent metal cation.

It belongs to the HpcH/HpaI aldolase family. Homohexamer; trimer of dimers. It depends on a divalent metal cation as a cofactor.

The catalysed reaction is 4-hydroxy-2-oxoheptanedioate = succinate semialdehyde + pyruvate. It participates in aromatic compound metabolism; 4-hydroxyphenylacetate degradation; pyruvate and succinate semialdehyde from 4-hydroxyphenylacetate: step 7/7. In terms of biological role, catalyzes the reversible retro-aldol cleavage of 4-hydroxy-2-ketoheptane-1,7-dioate (HKHD) to pyruvate and succinic semialdehyde. This is 4-hydroxy-2-oxo-heptane-1,7-dioate aldolase from Klebsiella pneumoniae subsp. pneumoniae (strain ATCC 700721 / MGH 78578).